Here is a 425-residue protein sequence, read N- to C-terminus: Intermediate conductance calcium-activated potassium channel protein 4 (425 aa).

Residues 30–50 (LVLAGTGIGLMVLHAEMLWFL) traverse the membrane as a helical segment. The chain crosses the membrane as a helical span at residues 59–79 (LLVKCLITLSTAFLLCLIVVF). A helical membrane pass occupies residues 105-121 (VAQILLELLVCGVHPVP). Residues 141–161 (GFLGEGEALLSLAMLLRLYLV) form a helical membrane-spanning segment. A helical membrane pass occupies residues 205–225 (LLLGLTLGLWLTTAWVLSVAE). The pore-forming intramembrane region spans 239–259 (LWLIPITFLTIGYGDVVPGTL). The chain crosses the membrane as a helical span at residues 263–283 (IVCLCTGVMGVCCTALLVAVV). A calmodulin-binding region spans residues 284-345 (ARKLEFNKAE…RRHQRKMLAA (62 aa)). His-356 is subject to Phosphohistidine.

It belongs to the potassium channel KCNN family. KCa3.1/KCNN4 subfamily. In terms of assembly, homodimer. Homotetramer. Heterotetramer of potassium channel proteins. Interacts with MTMR6; this interaction leads to selective dephosphorylation of PI(3)P in a lipid microdomain adjacent to KCNN4, resulting in a decrease of intermediate conductance calcium-activated potassium channel activity. Interacts (via the C-tail domain) with CALM1; the calmodulin binding is constitutive, does not require calcium and mediates calcium-dependent gating and four calmodulin molecules bind to one channel tetramer. Phosphorylation at His-356 by NDKB activates the intermediate conductance calcium-activated potassium channel activity, and conversely it's dephosphorylation by PHPT1 inhibits this activity.

The protein resides in the cell membrane. It localises to the cell projection. It is found in the ruffle membrane. It catalyses the reaction K(+)(in) = K(+)(out). Its function is as follows. Intermediate conductance calcium-activated potassium channel that mediates the voltage-independent transmembrane transfer of potassium across the cell membrane through a constitutive interaction with calmodulin which binds the intracellular calcium allowing its opening. The current is characterized by a voltage-independent activation, an intracellular calcium concentration increase-dependent activation and a single-channel conductance of about 25 picosiemens. Also presents an inwardly rectifying current, thus reducing its already small outward conductance of potassium ions, which is particularly the case when the membrane potential displays positive values, above + 20 mV. Controls calcium influx during vascular contractility by being responsible of membrane hyperpolarization induced by vasoactive factors in proliferative vascular smooth muscle cell types. Following calcium influx, the consecutive activation of KCNN4 channel leads to a hyperpolarization of the cell membrane potential and hence an increase of the electrical driving force for further calcium influx promoting sustained calcium entry in response to stimulation with chemotactic peptides. Required for maximal calcium influx and proliferation during the reactivation of naive T-cells. Plays a role in the late stages of EGF-induced macropinocytosis through activation by PI(3)P. The protein is Intermediate conductance calcium-activated potassium channel protein 4 of Rattus norvegicus (Rat).